A 506-amino-acid chain; its full sequence is Anaerobic nitric oxide reductase transcription regulator NorR (506 aa).

Position 57 is a 4-aspartylphosphate (Asp57). A Sigma-54 factor interaction domain is found at 187–416 (MIGLSPAMTQ…LEHAIHRAVV (230 aa)). ATP-binding positions include 215–222 (GETGTGKE) and 278–287 (ADNGTLFLDE). The segment at residues 481–500 (WAASARALETDVANLHRLAK) is a DNA-binding region (H-T-H motif).

It functions in the pathway nitrogen metabolism; nitric oxide reduction. In terms of biological role, required for the expression of anaerobic nitric oxide (NO) reductase, acts as a transcriptional activator for at least the norVW operon. Activation also requires sigma-54. In Salmonella choleraesuis (strain SC-B67), this protein is Anaerobic nitric oxide reductase transcription regulator NorR.